We begin with the raw amino-acid sequence, 218 residues long: Octanoyltransferase (218 aa).

Residues 31–206 (EETPDEVWLV…ELVNLLGYEQ (176 aa)) form the BPL/LPL catalytic domain. Residues 70–77 (RGGQVTYH), 137–139 (SLG), and 150–152 (GLA) contribute to the substrate site. Cysteine 168 serves as the catalytic Acyl-thioester intermediate.

This sequence belongs to the LipB family.

It localises to the cytoplasm. The catalysed reaction is octanoyl-[ACP] + L-lysyl-[protein] = N(6)-octanoyl-L-lysyl-[protein] + holo-[ACP] + H(+). Its pathway is protein modification; protein lipoylation via endogenous pathway; protein N(6)-(lipoyl)lysine from octanoyl-[acyl-carrier-protein]: step 1/2. In terms of biological role, catalyzes the transfer of endogenously produced octanoic acid from octanoyl-acyl-carrier-protein onto the lipoyl domains of lipoate-dependent enzymes. Lipoyl-ACP can also act as a substrate although octanoyl-ACP is likely to be the physiological substrate. The sequence is that of Octanoyltransferase from Vibrio vulnificus (strain YJ016).